Here is a 141-residue protein sequence, read N- to C-terminus: Hemoglobin subunit alpha (141 aa).

Residues 1–141 enclose the Globin domain; it reads VLSPADKTNV…VSTVLTSKYR (141 aa). Position 3 is a phosphoserine (S3). K7 is modified (N6-succinyllysine). T8 carries the post-translational modification Phosphothreonine. The residue at position 11 (K11) is an N6-succinyllysine. The residue at position 16 (K16) is an N6-acetyllysine; alternate. K16 carries the N6-succinyllysine; alternate modification. The residue at position 24 (Y24) is a Phosphotyrosine. S35 is subject to Phosphoserine. K40 is modified (N6-succinyllysine). S49 carries the post-translational modification Phosphoserine. H58 contacts O2. H87 lines the heme b pocket. S102 is subject to Phosphoserine. The residue at position 108 (T108) is a Phosphothreonine. Phosphoserine is present on residues S124 and S131. Phosphothreonine occurs at positions 134 and 137. A Phosphoserine modification is found at S138.

The protein belongs to the globin family. Heterotetramer of two alpha chains and two beta chains. Red blood cells.

Involved in oxygen transport from the lung to the various peripheral tissues. Functionally, hemopressin acts as an antagonist peptide of the cannabinoid receptor CNR1. Hemopressin-binding efficiently blocks cannabinoid receptor CNR1 and subsequent signaling. The chain is Hemoglobin subunit alpha (HBA) from Cebus capucinus (White-faced sapajou).